Reading from the N-terminus, the 36-residue chain is Potassium channel toxin alpha-KTx 23.1 (36 aa).

4 cysteine pairs are disulfide-bonded: Cys6–Cys26, Cys12–Cys31, Cys16–Cys33, and Cys21–Cys36. A Cysteine amide modification is found at Cys36.

This sequence belongs to the short scorpion toxin superfamily. Potassium channel inhibitor family. Alpha-KTx 23 subfamily. As to expression, expressed by the venom gland.

Its subcellular location is the secreted. In terms of biological role, voltage-gated potassium channel inhibitor. Selectively and irreversibly binds (K(d)=2.9 pM) and blocks hKv1.3/KCNA3 potassium channels of human T-lymphocytes. Weakly blocks hKCa3.1/KCNN4, mKv1.1/KCNA1, and hKv1.2/KCNA2 channels. In vivo, high doses (200 ug) produce no symptoms of intoxication when injected into mice. In Vaejovis mexicanus smithi (Mexican scorpion), this protein is Potassium channel toxin alpha-KTx 23.1.